Reading from the N-terminus, the 358-residue chain is 3-dehydroquinate synthase (358 aa).

Residues 70–75 (DGEQFK), 104–108 (GVIGD), 128–129 (TT), Lys-141, Lys-150, and 168–171 (CLHT) contribute to the NAD(+) site. Zn(2+) contacts are provided by Glu-183, His-246, and His-263.

This sequence belongs to the sugar phosphate cyclases superfamily. Dehydroquinate synthase family. Co(2+) is required as a cofactor. Requires Zn(2+) as cofactor. It depends on NAD(+) as a cofactor.

Its subcellular location is the cytoplasm. The catalysed reaction is 7-phospho-2-dehydro-3-deoxy-D-arabino-heptonate = 3-dehydroquinate + phosphate. It participates in metabolic intermediate biosynthesis; chorismate biosynthesis; chorismate from D-erythrose 4-phosphate and phosphoenolpyruvate: step 2/7. In terms of biological role, catalyzes the conversion of 3-deoxy-D-arabino-heptulosonate 7-phosphate (DAHP) to dehydroquinate (DHQ). This Shewanella baltica (strain OS185) protein is 3-dehydroquinate synthase.